The sequence spans 508 residues: Photosystem II CP47 reaction center protein (508 aa).

The next 6 membrane-spanning stretches (helical) occupy residues 21–36 (SVHI…WAGS), 101–115 (IVFS…IWHW), 140–156 (GIHL…FGAF), 203–218 (IAAG…FHLS), 237–252 (VLSS…AFVV), and 457–472 (SFAL…HGAR).

This sequence belongs to the PsbB/PsbC family. PsbB subfamily. PSII is composed of 1 copy each of membrane proteins PsbA, PsbB, PsbC, PsbD, PsbE, PsbF, PsbH, PsbI, PsbJ, PsbK, PsbL, PsbM, PsbT, PsbX, PsbY, PsbZ, Psb30/Ycf12, at least 3 peripheral proteins of the oxygen-evolving complex and a large number of cofactors. It forms dimeric complexes. Binds multiple chlorophylls. PSII binds additional chlorophylls, carotenoids and specific lipids. serves as cofactor.

The protein localises to the plastid. Its subcellular location is the chloroplast thylakoid membrane. Functionally, one of the components of the core complex of photosystem II (PSII). It binds chlorophyll and helps catalyze the primary light-induced photochemical processes of PSII. PSII is a light-driven water:plastoquinone oxidoreductase, using light energy to abstract electrons from H(2)O, generating O(2) and a proton gradient subsequently used for ATP formation. This is Photosystem II CP47 reaction center protein from Eucalyptus globulus subsp. globulus (Tasmanian blue gum).